We begin with the raw amino-acid sequence, 226 residues long: UPF0319 protein YPO1442/y2728/YP_1333 (226 aa).

A signal peptide spans 1–20 (MKLGLVAGMLAVCFSFSSVA).

Belongs to the UPF0319 family.

The chain is UPF0319 protein YPO1442/y2728/YP_1333 from Yersinia pestis.